A 139-amino-acid polypeptide reads, in one-letter code: Mitochondrial intermembrane space import and assembly protein 40-A (139 aa).

Intrachain disulfides connect Cys53–Cys55, Cys64–Cys97, and Cys74–Cys87. The region spanning 61–105 (SGPCGEQFKSAFSCFHYSQEEIKGSDCLDQFRGMQECMQKYPDLY) is the CHCH domain. Short sequence motifs (cx9C motif) lie at residues 64-74 (CGEQFKSAFSC) and 87-97 (CLDQFRGMQEC). A disordered region spans residues 103–139 (DLYPQEDDEEEAEKEKQNKEAEPSVTQSSDTKEESSS). The segment covering 115–124 (EKEKQNKEAE) has biased composition (basic and acidic residues).

In terms of assembly, monomer. Can form homooligomers.

It localises to the mitochondrion intermembrane space. Central component of a redox-sensitive mitochondrial intermembrane space import machinery which is required for the biogenesis of respiratory chain complexes. Functions as chaperone and catalyzes the formation of disulfide bonds in substrate proteins, such as COX17 or MICU1. Required for the import and folding of small cysteine-containing proteins (small Tim) in the mitochondrial intermembrane space (IMS). Precursor proteins to be imported into the IMS are translocated in their reduced form into the mitochondria. The chain is Mitochondrial intermembrane space import and assembly protein 40-A (chchd4-a) from Xenopus laevis (African clawed frog).